Here is a 307-residue protein sequence, read N- to C-terminus: Small ribosomal subunit biogenesis GTPase RsgA (307 aa).

One can recognise a CP-type G domain in the interval 80 to 237 (KVDLRQAIVS…IVDTPGIKEF (158 aa)). GTP is bound by residues 129–132 (NKID) and 180–188 (GQSGVGKSS). Positions 261, 266, 268, and 274 each coordinate Zn(2+).

This sequence belongs to the TRAFAC class YlqF/YawG GTPase family. RsgA subfamily. Monomer. Associates with 30S ribosomal subunit, binds 16S rRNA. Zn(2+) serves as cofactor.

The protein localises to the cytoplasm. One of several proteins that assist in the late maturation steps of the functional core of the 30S ribosomal subunit. Helps release RbfA from mature subunits. May play a role in the assembly of ribosomal proteins into the subunit. Circularly permuted GTPase that catalyzes slow GTP hydrolysis, GTPase activity is stimulated by the 30S ribosomal subunit. In Borrelia garinii subsp. bavariensis (strain ATCC BAA-2496 / DSM 23469 / PBi) (Borreliella bavariensis), this protein is Small ribosomal subunit biogenesis GTPase RsgA.